A 371-amino-acid polypeptide reads, in one-letter code: Mannonate dehydratase (371 aa).

The protein belongs to the mannonate dehydratase family. It depends on Fe(2+) as a cofactor. Mn(2+) serves as cofactor.

The enzyme catalyses D-mannonate = 2-dehydro-3-deoxy-D-gluconate + H2O. The protein operates within carbohydrate metabolism; pentose and glucuronate interconversion. Its function is as follows. Catalyzes the dehydration of D-mannonate. The polypeptide is Mannonate dehydratase (Geobacillus thermodenitrificans (strain NG80-2)).